Consider the following 363-residue polypeptide: Probable dual-specificity RNA methyltransferase RlmN (363 aa).

Residue Glu-106 is the Proton acceptor of the active site. Residues 112 to 345 form the Radical SAM core domain; that stretch reads HEYGNSVCVT…VTIRREQGHD (234 aa). A disulfide bridge connects residues Cys-119 and Cys-350. The [4Fe-4S] cluster site is built by Cys-126, Cys-130, and Cys-133. S-adenosyl-L-methionine-binding positions include 176–177, Ser-208, 231–233, and Asn-307; these read GE and SLH. Catalysis depends on Cys-350, which acts as the S-methylcysteine intermediate.

The protein belongs to the radical SAM superfamily. RlmN family. [4Fe-4S] cluster is required as a cofactor.

The protein resides in the cytoplasm. The enzyme catalyses adenosine(2503) in 23S rRNA + 2 reduced [2Fe-2S]-[ferredoxin] + 2 S-adenosyl-L-methionine = 2-methyladenosine(2503) in 23S rRNA + 5'-deoxyadenosine + L-methionine + 2 oxidized [2Fe-2S]-[ferredoxin] + S-adenosyl-L-homocysteine. It carries out the reaction adenosine(37) in tRNA + 2 reduced [2Fe-2S]-[ferredoxin] + 2 S-adenosyl-L-methionine = 2-methyladenosine(37) in tRNA + 5'-deoxyadenosine + L-methionine + 2 oxidized [2Fe-2S]-[ferredoxin] + S-adenosyl-L-homocysteine. In terms of biological role, specifically methylates position 2 of adenine 2503 in 23S rRNA and position 2 of adenine 37 in tRNAs. The chain is Probable dual-specificity RNA methyltransferase RlmN from Bacillus velezensis (strain DSM 23117 / BGSC 10A6 / LMG 26770 / FZB42) (Bacillus amyloliquefaciens subsp. plantarum).